A 199-amino-acid chain; its full sequence is Peptidyl-tRNA hydrolase (199 aa).

Residue Tyr-15 coordinates tRNA. The Proton acceptor role is filled by His-20. The tRNA site is built by Tyr-66, Asn-68, and Asn-114.

This sequence belongs to the PTH family. As to quaternary structure, monomer.

The protein resides in the cytoplasm. It catalyses the reaction an N-acyl-L-alpha-aminoacyl-tRNA + H2O = an N-acyl-L-amino acid + a tRNA + H(+). In terms of biological role, hydrolyzes ribosome-free peptidyl-tRNAs (with 1 or more amino acids incorporated), which drop off the ribosome during protein synthesis, or as a result of ribosome stalling. Its function is as follows. Catalyzes the release of premature peptidyl moieties from peptidyl-tRNA molecules trapped in stalled 50S ribosomal subunits, and thus maintains levels of free tRNAs and 50S ribosomes. This chain is Peptidyl-tRNA hydrolase, found in Burkholderia cenocepacia (strain HI2424).